A 304-amino-acid chain; its full sequence is MSLNPPIFLKRSEENSSKFVETKQSQTTSIASEDPLQNLCLASQEVLQKAQQSGRSKCLKCGGSRMFYCYTCYVPVENVPIEQIPLVKLPLKIDIIKHPNETDGKSTAIHAKLLAPEFVNIYTYPCIPEYEEKDHEVALIFPGPQSISIKDISFHLQKRIQNNVRGKNDDPDKPSFKRKRTEEQEFCDLNDSKCKGTTLKKIIFIDSTWNQTNKIFTDERLQGLLQVELKTRKTCFWRHQKGKPDTFLSTIEAIYYFLVDYHTDILKEKYRGQYDNLLFFYSFMYQLIKNAKCSGDKETGKLTH.

Ser-2 carries the N-acetylserine modification. The DXTW motif lies at 206 to 209 (DSTW).

The protein belongs to the TDD superfamily. DTWD1 family.

It is found in the nucleus. The catalysed reaction is a uridine in tRNA + S-adenosyl-L-methionine = a 3-[(3S)-3-amino-3-carboxypropyl]uridine in tRNA + S-methyl-5'-thioadenosine + H(+). Its function is as follows. Catalyzes the formation of 3-(3-amino-3-carboxypropyl)uridine (acp3U) at position 20 in the D-loop of several cytoplasmic tRNAs (acp3U(20)). This Homo sapiens (Human) protein is tRNA-uridine aminocarboxypropyltransferase 1.